A 351-amino-acid polypeptide reads, in one-letter code: Uroporphyrinogen decarboxylase (351 aa).

Substrate contacts are provided by residues 25-29, D74, Y151, S206, and H325; that span reads RQAGR.

It belongs to the uroporphyrinogen decarboxylase family. As to quaternary structure, homodimer.

It localises to the cytoplasm. The catalysed reaction is uroporphyrinogen III + 4 H(+) = coproporphyrinogen III + 4 CO2. The protein operates within porphyrin-containing compound metabolism; protoporphyrin-IX biosynthesis; coproporphyrinogen-III from 5-aminolevulinate: step 4/4. Catalyzes the decarboxylation of four acetate groups of uroporphyrinogen-III to yield coproporphyrinogen-III. In Pelodictyon phaeoclathratiforme (strain DSM 5477 / BU-1), this protein is Uroporphyrinogen decarboxylase.